The sequence spans 811 residues: Abnormal pharyngeal pumping eat-20 (811 aa).

The first 20 residues, 1-20 (MTTFCRVLLIFGIYVAVSCA), serve as a signal peptide directing secretion. Residues 21 to 749 (QSVEDDVFHF…GKQSSAVASW (729 aa)) are Extracellular-facing. Asparagine 90, asparagine 171, and asparagine 232 each carry an N-linked (GlcNAc...) asparagine glycan. EGF-like domains are found at residues 220–257 (PPSP…DRCE), 258–293 (LDVC…LLCE), and 301–335 (AAPI…ANCN). Disulfide bonds link cysteine 224–cysteine 235, cysteine 229–cysteine 245, cysteine 247–cysteine 256, cysteine 261–cysteine 272, cysteine 266–cysteine 281, cysteine 283–cysteine 292, cysteine 305–cysteine 314, cysteine 309–cysteine 323, and cysteine 325–cysteine 334. A glycan (N-linked (GlcNAc...) asparagine) is linked at asparagine 371. Disordered stretches follow at residues 544–579 (FVSP…QVAT), 592–659 (FPTT…AIST), and 690–739 (PHPQ…HTSS). Over residues 551 to 567 (DENEEEEEDETTDETEE) the composition is skewed to acidic residues. Polar residues predominate over residues 570–579 (PTPSTMQVAT). Residues 597-612 (DMEETDEEEDMTEEVT) are compositionally biased toward acidic residues. Over residues 626–639 (PSSTTFTTEAPTTT) the composition is skewed to low complexity. Acidic residues-rich tracts occupy residues 640–655 (MEEE…ESEE) and 705–717 (IESE…ESNE). The chain crosses the membrane as a helical span at residues 750–770 (IIATIALIVLGSLLLATSLFV). The Cytoplasmic portion of the chain corresponds to 771-811 (LRYIRQSRKLHGKYNPAREEHNLSAAYAMPMSHIAKEERLI).

It is found in the membrane. Functionally, regulates pharyngeal pumping during feeding. This is Abnormal pharyngeal pumping eat-20 (eat-20) from Caenorhabditis briggsae.